The sequence spans 683 residues: MWLKLFFLLLYFLVLFVLARFFEAIVWYETGIFATQLVDPVALSFKKLKTILECRGLGYSGLPEKKDVRELVEKSGDLMEGELYSALKEEEASESVSSTNFSGEMHFYELVEDTKDGIWLVQVIANDRSPLVGKIHWEKMVKKVSRFGIRTGTFNCSSDPRYCRRRGWVRSTLIMSVPQTSTSKGKVMLKEYSGRKIEVEHIFKWITAHAASRIKTIYNVEHLKEEWNKSDQYWVKIYLFANLDQPPAFFSALSIKFTGRVEFIFVNVENWNNKSYMTDIGIYNMPSYILRTPEGIYRYGNHTGEFISLQAMDSFLRSLQPEVNDLFVLSLVLVNLMAWMDLFITQGATIKRFVVLISTLGTYNSLLIISWLPVLGFLQLPYLDSFYDYSLRLLRYSNTTTLASWVRADWMFYTSHPALFLSTYLGHGLLIDYFEKKRRRSNNDEVNANNLEWLSSLWDWYTSYLFHPIASFQNFPVDSDWDEDPDLFLERLAFPDLWLHPLIPTDYIKNLPMWRFKCLGVQSEEEMSESSQDTENDSDSDNMDTFSSSKDIFEDKQSVVHSSPGRTSHCDTEACSCANKCESSPCERKRRSYGSHNTDEDMEPDWLTWPAGTLHCTECVVCLENFENGCLLMGLPCGHVFHQNCIVMWLAGGRHCCPVCRWPSYKKKQPYAQQQPLSNDVPS.

A run of 4 helical transmembrane segments spans residues 6–26 (FFLL…EAIV), 326–346 (LFVL…FITQ), 366–386 (LLII…LDSF), and 411–431 (MFYT…GLLI). Acidic residues predominate over residues 525 to 542 (EEMSESSQDTENDSDSDN). The interval 525–548 (EEMSESSQDTENDSDSDNMDTFSS) is disordered. The RING-type zinc-finger motif lies at 619-661 (CVVCLENFENGCLLMGLPCGHVFHQNCIVMWLAGGRHCCPVCR).

As to quaternary structure, interacts with DERL1 and VCP. In terms of tissue distribution, highly expressed in the normal cerebellum but not in the cerebral cortex.

The protein localises to the endoplasmic reticulum membrane. It carries out the reaction S-ubiquitinyl-[E2 ubiquitin-conjugating enzyme]-L-cysteine + [acceptor protein]-L-lysine = [E2 ubiquitin-conjugating enzyme]-L-cysteine + N(6)-ubiquitinyl-[acceptor protein]-L-lysine.. It participates in protein modification; protein ubiquitination. Acts as an E2-dependent E3 ubiquitin-protein ligase, probably involved in the ER-associated protein degradation pathway. This Mus musculus (Mouse) protein is E3 ubiquitin-protein ligase RNF103 (Rnf103).